The primary structure comprises 314 residues: Homoserine O-acetyltransferase (314 aa).

The active-site Acyl-thioester intermediate is the cysteine 142. Residues lysine 163 and serine 192 each coordinate substrate. Histidine 235 (proton acceptor) is an active-site residue. Glutamate 237 is an active-site residue. Arginine 249 provides a ligand contact to substrate.

The protein belongs to the MetA family.

It localises to the cytoplasm. The enzyme catalyses L-homoserine + acetyl-CoA = O-acetyl-L-homoserine + CoA. Its pathway is amino-acid biosynthesis; L-methionine biosynthesis via de novo pathway; O-acetyl-L-homoserine from L-homoserine: step 1/1. Transfers an acetyl group from acetyl-CoA to L-homoserine, forming acetyl-L-homoserine. The sequence is that of Homoserine O-acetyltransferase from Streptococcus thermophilus (strain ATCC BAA-250 / LMG 18311).